The primary structure comprises 294 residues: MINGIINLKKEAGMTSHDAVFKLRKLLQEKKIGHGGTLDPDVVGVLPIAVGKATRMIEYMTEAGKVYEGQVTLGYSTTTEDASGEVVARSSLPAVLTEELVDQTMTTFLGKITQTPPMYSAVKVNGRKLYEYARAGESVERPRREVTISLFERTSPLNFTEDGLCRFSFKVACSKGTYVRTLAVDLGRALGVESHMSFLQRSASAGLTLETAYTLGEIADMVSKQEMSFLLPIEYGVADLPKMVIDDTELTEISFGRRLSLPSQEPLLAAFHGEKVIAILEKRDQEYKPKKVLI.

Residue Asp39 is the Nucleophile of the active site.

It belongs to the pseudouridine synthase TruB family. Type 1 subfamily.

The enzyme catalyses uridine(55) in tRNA = pseudouridine(55) in tRNA. Responsible for synthesis of pseudouridine from uracil-55 in the psi GC loop of transfer RNAs. The protein is tRNA pseudouridine synthase B of Streptococcus pyogenes serotype M5 (strain Manfredo).